The following is a 442-amino-acid chain: Elongation factor 1-alpha 1 (442 aa).

In terms of domain architecture, tr-type G spans lysine 5 to lysine 227. The segment at glycine 14–serine 21 is G1. Residue glycine 14 to serine 21 coordinates GTP. The tract at residues glycine 70–aspartate 74 is G2. Residues aspartate 91–glycine 94 form a G3 region. Residues aspartate 91–histidine 95 and asparagine 153–aspartate 156 each bind GTP. Residues asparagine 153 to aspartate 156 form a G4 region. Residues serine 194–phenylalanine 196 are G5.

This sequence belongs to the TRAFAC class translation factor GTPase superfamily. Classic translation factor GTPase family. EF-Tu/EF-1A subfamily.

Its subcellular location is the cytoplasm. Functionally, this protein promotes the GTP-dependent binding of aminoacyl-tRNA to the A-site of ribosomes during protein biosynthesis. The polypeptide is Elongation factor 1-alpha 1 (EFA1) (Euplotes crassus).